The chain runs to 236 residues: Three prime repair exonuclease 2 (236 aa).

Mg(2+) is bound by residues Asp14 and Glu16. Substrate contacts are provided by residues 16 to 17 (EA) and Tyr122. The Proton donor/acceptor role is filled by His188. Mg(2+) is bound at residue Asp193. Residue Asp193 coordinates substrate.

This sequence belongs to the exonuclease superfamily. TREX family. In terms of assembly, homodimer. It depends on Mg(2+) as a cofactor. As to expression, detected in heart, breast, prostate, skeletal muscle, testis, uterus, bone marrow, colon, small intestine, stomach and thymus.

It localises to the nucleus. It catalyses the reaction Exonucleolytic cleavage in the 3'- to 5'-direction to yield nucleoside 5'-phosphates.. Its function is as follows. Exonuclease with a preference for double-stranded DNA with mismatched 3' termini. May play a role in DNA repair. This chain is Three prime repair exonuclease 2 (TREX2), found in Homo sapiens (Human).